The chain runs to 252 residues: Carbohydrate deacetylase (252 aa).

Positions 59 and 122 each coordinate Mg(2+).

Belongs to the YdjC deacetylase family. In terms of assembly, homodimer. Mg(2+) serves as cofactor.

Probably catalyzes the deacetylation of acetylated carbohydrates an important step in the degradation of oligosaccharides. This chain is Carbohydrate deacetylase, found in Vibrio cholerae serotype O1 (strain ATCC 39315 / El Tor Inaba N16961).